The chain runs to 222 residues: 3-dehydroquinate dehydratase (222 aa).

3-dehydroquinate is bound by residues 29-31 and arginine 55; that span reads ELR. Histidine 112 functions as the Proton donor/acceptor in the catalytic mechanism. Lysine 139 functions as the Schiff-base intermediate with substrate in the catalytic mechanism. 3-dehydroquinate is bound by residues arginine 178, serine 199, and glutamine 203.

Belongs to the type-I 3-dehydroquinase family. In terms of assembly, homodimer.

It catalyses the reaction 3-dehydroquinate = 3-dehydroshikimate + H2O. It participates in metabolic intermediate biosynthesis; chorismate biosynthesis; chorismate from D-erythrose 4-phosphate and phosphoenolpyruvate: step 3/7. In terms of biological role, involved in the third step of the chorismate pathway, which leads to the biosynthesis of aromatic amino acids. Catalyzes the cis-dehydration of 3-dehydroquinate (DHQ) and introduces the first double bond of the aromatic ring to yield 3-dehydroshikimate. The chain is 3-dehydroquinate dehydratase from Dehalococcoides mccartyi (strain ATCC BAA-2100 / JCM 16839 / KCTC 5957 / BAV1).